The following is a 459-amino-acid chain: tRNA(Ile)-lysidine synthase (459 aa).

An ATP-binding site is contributed by 38 to 43 (SGGMDS).

It belongs to the tRNA(Ile)-lysidine synthase family.

The protein resides in the cytoplasm. It catalyses the reaction cytidine(34) in tRNA(Ile2) + L-lysine + ATP = lysidine(34) in tRNA(Ile2) + AMP + diphosphate + H(+). In terms of biological role, ligates lysine onto the cytidine present at position 34 of the AUA codon-specific tRNA(Ile) that contains the anticodon CAU, in an ATP-dependent manner. Cytidine is converted to lysidine, thus changing the amino acid specificity of the tRNA from methionine to isoleucine. This chain is tRNA(Ile)-lysidine synthase, found in Acinetobacter baylyi (strain ATCC 33305 / BD413 / ADP1).